The following is a 227-amino-acid chain: Cytochrome c oxidase subunit 2 (227 aa).

The Mitochondrial intermembrane segment spans residues 1 to 14 (MAYPFELGFQDATS). The chain crosses the membrane as a helical span at residues 15–45 (PIMEELLHFHDHTLMIVFLISSLVLYIISLM). At 46–59 (LTTKLTHTSTMDAQ) the chain is on the mitochondrial matrix side. A helical transmembrane segment spans residues 60–87 (EVETIWTILPAIILILIALPSLRVLYMM). Topologically, residues 88–227 (DEINDPSLTV…HFENWSSSML (140 aa)) are mitochondrial intermembrane. Histidine 161, cysteine 196, glutamate 198, cysteine 200, histidine 204, and methionine 207 together coordinate Cu cation. Glutamate 198 is a Mg(2+) binding site.

The protein belongs to the cytochrome c oxidase subunit 2 family. As to quaternary structure, component of the cytochrome c oxidase (complex IV, CIV), a multisubunit enzyme composed of 14 subunits. The complex is composed of a catalytic core of 3 subunits MT-CO1, MT-CO2 and MT-CO3, encoded in the mitochondrial DNA, and 11 supernumerary subunits COX4I, COX5A, COX5B, COX6A, COX6B, COX6C, COX7A, COX7B, COX7C, COX8 and NDUFA4, which are encoded in the nuclear genome. The complex exists as a monomer or a dimer and forms supercomplexes (SCs) in the inner mitochondrial membrane with NADH-ubiquinone oxidoreductase (complex I, CI) and ubiquinol-cytochrome c oxidoreductase (cytochrome b-c1 complex, complex III, CIII), resulting in different assemblies (supercomplex SCI(1)III(2)IV(1) and megacomplex MCI(2)III(2)IV(2)). Found in a complex with TMEM177, COA6, COX18, COX20, SCO1 and SCO2. Interacts with TMEM177 in a COX20-dependent manner. Interacts with COX20. Interacts with COX16. Requires Cu cation as cofactor.

It is found in the mitochondrion inner membrane. The catalysed reaction is 4 Fe(II)-[cytochrome c] + O2 + 8 H(+)(in) = 4 Fe(III)-[cytochrome c] + 2 H2O + 4 H(+)(out). In terms of biological role, component of the cytochrome c oxidase, the last enzyme in the mitochondrial electron transport chain which drives oxidative phosphorylation. The respiratory chain contains 3 multisubunit complexes succinate dehydrogenase (complex II, CII), ubiquinol-cytochrome c oxidoreductase (cytochrome b-c1 complex, complex III, CIII) and cytochrome c oxidase (complex IV, CIV), that cooperate to transfer electrons derived from NADH and succinate to molecular oxygen, creating an electrochemical gradient over the inner membrane that drives transmembrane transport and the ATP synthase. Cytochrome c oxidase is the component of the respiratory chain that catalyzes the reduction of oxygen to water. Electrons originating from reduced cytochrome c in the intermembrane space (IMS) are transferred via the dinuclear copper A center (CU(A)) of subunit 2 and heme A of subunit 1 to the active site in subunit 1, a binuclear center (BNC) formed by heme A3 and copper B (CU(B)). The BNC reduces molecular oxygen to 2 water molecules using 4 electrons from cytochrome c in the IMS and 4 protons from the mitochondrial matrix. The polypeptide is Cytochrome c oxidase subunit 2 (MT-CO2) (Sciurus carolinensis (Eastern gray squirrel)).